Consider the following 549-residue polypeptide: Glucose-6-phosphate isomerase (549 aa).

Catalysis depends on Glu-355, which acts as the Proton donor. Active-site residues include His-386 and Lys-514.

It belongs to the GPI family.

The protein localises to the cytoplasm. It carries out the reaction alpha-D-glucose 6-phosphate = beta-D-fructose 6-phosphate. The protein operates within carbohydrate biosynthesis; gluconeogenesis. Its pathway is carbohydrate degradation; glycolysis; D-glyceraldehyde 3-phosphate and glycerone phosphate from D-glucose: step 2/4. Catalyzes the reversible isomerization of glucose-6-phosphate to fructose-6-phosphate. This Klebsiella pneumoniae (strain 342) protein is Glucose-6-phosphate isomerase.